The sequence spans 248 residues: Small ribosomal subunit protein uS5 (248 aa).

Positions 1–87 (MEDKKLSSAK…NPRFQRNNKD (87 aa)) are disordered. Low complexity predominate over residues 8–23 (SAKPATSSKPAPKAPS). Positions 57 to 87 (VAFEKRNFTSGDKTKKPTDSKNPRFQRNNKD) are enriched in basic and acidic residues. Positions 94 to 157 (YEEKIVDIAR…KDAHNNLVEV (64 aa)) constitute an S5 DRBM domain.

It belongs to the universal ribosomal protein uS5 family. In terms of assembly, part of the 30S ribosomal subunit. Contacts proteins S4 and S8.

Functionally, with S4 and S12 plays an important role in translational accuracy. In terms of biological role, located at the back of the 30S subunit body where it stabilizes the conformation of the head with respect to the body. The protein is Small ribosomal subunit protein uS5 of Mycoplasmopsis synoviae (strain 53) (Mycoplasma synoviae).